The following is a 243-amino-acid chain: Phosphoribosyl isomerase A (243 aa).

Catalysis depends on Asp9, which acts as the Proton acceptor. The active-site Proton donor is Asp128.

This sequence belongs to the HisA/HisF family.

Its subcellular location is the cytoplasm. It catalyses the reaction 1-(5-phospho-beta-D-ribosyl)-5-[(5-phospho-beta-D-ribosylamino)methylideneamino]imidazole-4-carboxamide = 5-[(5-phospho-1-deoxy-D-ribulos-1-ylimino)methylamino]-1-(5-phospho-beta-D-ribosyl)imidazole-4-carboxamide. The enzyme catalyses N-(5-phospho-beta-D-ribosyl)anthranilate = 1-(2-carboxyphenylamino)-1-deoxy-D-ribulose 5-phosphate. It participates in amino-acid biosynthesis; L-histidine biosynthesis; L-histidine from 5-phospho-alpha-D-ribose 1-diphosphate: step 4/9. The protein operates within amino-acid biosynthesis; L-tryptophan biosynthesis; L-tryptophan from chorismate: step 3/5. In terms of biological role, involved in both the histidine and tryptophan biosynthetic pathways. The protein is Phosphoribosyl isomerase A of Mycobacterium avium (strain 104).